The following is a 156-amino-acid chain: Small ribosomal subunit protein uS7 (156 aa).

The protein belongs to the universal ribosomal protein uS7 family. Part of the 30S ribosomal subunit. Contacts proteins S9 and S11.

In terms of biological role, one of the primary rRNA binding proteins, it binds directly to 16S rRNA where it nucleates assembly of the head domain of the 30S subunit. Is located at the subunit interface close to the decoding center, probably blocks exit of the E-site tRNA. This Methylococcus capsulatus (strain ATCC 33009 / NCIMB 11132 / Bath) protein is Small ribosomal subunit protein uS7.